A 404-amino-acid polypeptide reads, in one-letter code: Alpha-galactosidase A (404 aa).

The signal sequence occupies residues Met-1–Ala-23. Disulfide bonds link Cys-45-Cys-77 and Cys-124-Cys-154. The Nucleophile role is filled by Asp-152. Position 185 to 189 (Glu-185 to Asn-189) interacts with substrate. Asp-207 serves as the catalytic Proton donor.

The protein belongs to the glycosyl hydrolase 27 family.

It catalyses the reaction Hydrolysis of terminal, non-reducing alpha-D-galactose residues in alpha-D-galactosides, including galactose oligosaccharides, galactomannans and galactolipids.. In terms of biological role, hydrolyzes galactomannan found in plant cell wall, by cleaving alpha-1,6-D-galactose side-chains from the mannan backbone. Appears to act in synergy with mannanase (ManA) to elicit hydrolysis of galactomannan. Has greater activity against galactomannans with decreased degree of polymerisation values. To a lesser extent, is also able to degrade other galactosides containing alpha-1,6-linked D-galactose, such as melibiose and stachyose. The sequence is that of Alpha-galactosidase A (agaA) from Cellvibrio japonicus (strain Ueda107) (Pseudomonas fluorescens subsp. cellulosa).